A 346-amino-acid polypeptide reads, in one-letter code: Biotin synthase (346 aa).

The Radical SAM core domain occupies 38–256 (QQVQVSTLLS…IAVARIMMPT (219 aa)). Residues cysteine 53, cysteine 57, and cysteine 60 each coordinate [4Fe-4S] cluster. Positions 97, 128, 188, and 260 each coordinate [2Fe-2S] cluster.

The protein belongs to the radical SAM superfamily. Biotin synthase family. Homodimer. The cofactor is [4Fe-4S] cluster. It depends on [2Fe-2S] cluster as a cofactor.

The enzyme catalyses (4R,5S)-dethiobiotin + (sulfur carrier)-SH + 2 reduced [2Fe-2S]-[ferredoxin] + 2 S-adenosyl-L-methionine = (sulfur carrier)-H + biotin + 2 5'-deoxyadenosine + 2 L-methionine + 2 oxidized [2Fe-2S]-[ferredoxin]. It functions in the pathway cofactor biosynthesis; biotin biosynthesis; biotin from 7,8-diaminononanoate: step 2/2. Its function is as follows. Catalyzes the conversion of dethiobiotin (DTB) to biotin by the insertion of a sulfur atom into dethiobiotin via a radical-based mechanism. This is Biotin synthase from Salmonella choleraesuis (strain SC-B67).